The chain runs to 379 residues: Glutamate 5-kinase (379 aa).

Lys-20 contributes to the ATP binding site. Residues Ser-59, Asp-146, and Asn-158 each contribute to the substrate site. Residue 220 to 226 (SGGMYSK) participates in ATP binding. Positions 285–362 (TGSVVVDDGA…AELTAILGDN (78 aa)) constitute a PUA domain.

Belongs to the glutamate 5-kinase family.

It localises to the cytoplasm. It carries out the reaction L-glutamate + ATP = L-glutamyl 5-phosphate + ADP. It functions in the pathway amino-acid biosynthesis; L-proline biosynthesis; L-glutamate 5-semialdehyde from L-glutamate: step 1/2. In terms of biological role, catalyzes the transfer of a phosphate group to glutamate to form L-glutamate 5-phosphate. This Oleidesulfovibrio alaskensis (strain ATCC BAA-1058 / DSM 17464 / G20) (Desulfovibrio alaskensis) protein is Glutamate 5-kinase.